The primary structure comprises 466 residues: Asparagine--tRNA ligase (466 aa).

This sequence belongs to the class-II aminoacyl-tRNA synthetase family. As to quaternary structure, homodimer.

It localises to the cytoplasm. It catalyses the reaction tRNA(Asn) + L-asparagine + ATP = L-asparaginyl-tRNA(Asn) + AMP + diphosphate + H(+). In Xylella fastidiosa (strain Temecula1 / ATCC 700964), this protein is Asparagine--tRNA ligase.